Consider the following 347-residue polypeptide: tRNA N6-adenosine threonylcarbamoyltransferase (347 aa).

Fe cation contacts are provided by His111 and His115. Substrate contacts are provided by residues 134–138 (LISGG), Asp167, Gly180, and Asn277. Asp305 contacts Fe cation.

The protein belongs to the KAE1 / TsaD family. The cofactor is Fe(2+).

The protein resides in the cytoplasm. The catalysed reaction is L-threonylcarbamoyladenylate + adenosine(37) in tRNA = N(6)-L-threonylcarbamoyladenosine(37) in tRNA + AMP + H(+). Functionally, required for the formation of a threonylcarbamoyl group on adenosine at position 37 (t(6)A37) in tRNAs that read codons beginning with adenine. Is involved in the transfer of the threonylcarbamoyl moiety of threonylcarbamoyl-AMP (TC-AMP) to the N6 group of A37, together with TsaE and TsaB. TsaD likely plays a direct catalytic role in this reaction. In Actinobacillus pleuropneumoniae serotype 5b (strain L20), this protein is tRNA N6-adenosine threonylcarbamoyltransferase.